Here is a 278-residue protein sequence, read N- to C-terminus: Malonyl-[acyl-carrier protein] O-methyltransferase (278 aa).

Belongs to the methyltransferase superfamily.

It carries out the reaction malonyl-[ACP] + S-adenosyl-L-methionine = malonyl-[ACP] methyl ester + S-adenosyl-L-homocysteine. It participates in cofactor biosynthesis; biotin biosynthesis. Functionally, converts the free carboxyl group of a malonyl-thioester to its methyl ester by transfer of a methyl group from S-adenosyl-L-methionine (SAM). It allows to synthesize pimeloyl-ACP via the fatty acid synthetic pathway. The chain is Malonyl-[acyl-carrier protein] O-methyltransferase from Brevibacillus brevis (strain 47 / JCM 6285 / NBRC 100599).